We begin with the raw amino-acid sequence, 482 residues long: Spore germination protein A1 (482 aa).

The next 6 helical transmembrane spans lie at 242-262 (VAILVDSSPFVLLVPVSLGIL), 284-304 (FASIFITLFLSSIYITLVSFH), 321-341 (ENVPFPPIFEALLMEVTIELL), 351-371 (PLGQTIGLVGGVVIGQAAVEA), 373-393 (LVSSILVIVVSVIALASFTVP), and 406-426 (FISMFSAAILGLYGIILFMLV).

The protein belongs to the GerABKA family.

The protein resides in the cell membrane. In terms of biological role, forms a complex at the inner spore membrane which acts as a receptor for L-alanine, thus is involved in the stimulation of germination in response to alanine. Can stimulate germination in the absence of GerD and GerK gene products (fructose and glucose receptors, respectively), but the response is improved in their presence. This is Spore germination protein A1 (gerAA) from Bacillus subtilis (strain 168).